The following is a 542-amino-acid chain: 1,3-beta-glucanosyltransferase gas1 (542 aa).

An N-terminal signal peptide occupies residues 1 to 19; it reads MKFSILSLAVAGLVGLAKA. Asn-35 carries an N-linked (GlcNAc...) asparagine glycan. Residues Cys-70 and Cys-99 are joined by a disulfide bond. (1,3-beta-D-glucosyl)n is bound at residue Tyr-88. Asn-91 carries N-linked (GlcNAc...) asparagine glycosylation. (1,3-beta-D-glucosyl)n contacts are provided by Asn-156 and Glu-157. Glu-157 serves as the catalytic Proton donor. A glycan (N-linked (GlcNAc...) asparagine) is linked at Asn-161. (1,3-beta-D-glucosyl)n is bound by residues Asp-198 and Arg-203. 5 cysteine pairs are disulfide-bonded: Cys-212-Cys-345, Cys-230-Cys-261, Cys-367-Cys-419, Cys-376-Cys-439, and Cys-395-Cys-400. The N-linked (GlcNAc...) asparagine glycan is linked to Asn-249. Residue Glu-258 is the Nucleophile of the active site. Asn-279 carries N-linked (GlcNAc...) asparagine glycosylation. Residue Tyr-290 participates in (1,3-beta-D-glucosyl)n binding. N-linked (GlcNAc...) asparagine glycosylation is found at Asn-406, Asn-484, Asn-502, and Asn-509. A disordered region spans residues 490-515; sequence MSTSYTSGSGSSNSSGSSSNSSSKSS. Ser-516 carries GPI-anchor amidated serine lipidation. Positions 517–542 are cleaved as a propeptide — removed in mature form; sequence GASSYNLNMVITFLSVVIGGTAVLFI.

This sequence belongs to the glycosyl hydrolase 72 family. The GPI-anchor is attached to the protein in the endoplasmic reticulum and serves to target the protein to the cell surface. There, the glucosamine-inositol phospholipid moiety is cleaved off and the GPI-modified mannoprotein is covalently attached via its lipidless GPI glycan remnant to the 1,6-beta-glucan of the outer cell wall layer.

It is found in the secreted. The protein localises to the cell wall. Its subcellular location is the membrane. Functionally, splits internally a 1,3-beta-glucan molecule and transfers the newly generated reducing end (the donor) to the non-reducing end of another 1,3-beta-glucan molecule (the acceptor) forming a 1,3-beta linkage, resulting in the elongation of 1,3-beta-glucan chains in the cell wall. This chain is 1,3-beta-glucanosyltransferase gas1 (gas1), found in Schizosaccharomyces pombe (strain 972 / ATCC 24843) (Fission yeast).